Reading from the N-terminus, the 122-residue chain is Large ribosomal subunit protein uL14 (122 aa).

This sequence belongs to the universal ribosomal protein uL14 family. As to quaternary structure, part of the 50S ribosomal subunit. Forms a cluster with proteins L3 and L19. In the 70S ribosome, L14 and L19 interact and together make contacts with the 16S rRNA in bridges B5 and B8.

Binds to 23S rRNA. Forms part of two intersubunit bridges in the 70S ribosome. The polypeptide is Large ribosomal subunit protein uL14 (Lactococcus lactis subsp. lactis (strain IL1403) (Streptococcus lactis)).